A 21-amino-acid polypeptide reads, in one-letter code: Phenol-soluble modulin alpha 2 peptide (21 aa).

The protein belongs to the phenol-soluble modulin alpha peptides family.

Peptide which can recruit, activate and subsequently lyse human neutrophils, thus eliminating the main cellular defense against infection. This Staphylococcus aureus (strain USA300 / TCH1516) protein is Phenol-soluble modulin alpha 2 peptide (psmA2).